Consider the following 196-residue polypeptide: Thymidine kinase (196 aa).

Residues 9–16 and 87–90 each bind ATP; these read SAMNAGKS and DECQ. The active-site Proton acceptor is the Glu88. Cys145, Cys147, Cys182, and His185 together coordinate Zn(2+).

The protein belongs to the thymidine kinase family. In terms of assembly, homotetramer.

It is found in the cytoplasm. It carries out the reaction thymidine + ATP = dTMP + ADP + H(+). The polypeptide is Thymidine kinase (Yersinia pestis).